The primary structure comprises 722 residues: Polyribonucleotide nucleotidyltransferase (722 aa).

Residues Asp-487 and Asp-493 each contribute to the Mg(2+) site. The 60-residue stretch at Pro-554 to Ile-613 folds into the KH domain. In terms of domain architecture, S1 motif spans Gly-623–Lys-691.

It belongs to the polyribonucleotide nucleotidyltransferase family. It depends on Mg(2+) as a cofactor.

It localises to the cytoplasm. It carries out the reaction RNA(n+1) + phosphate = RNA(n) + a ribonucleoside 5'-diphosphate. Functionally, involved in mRNA degradation. Catalyzes the phosphorolysis of single-stranded polyribonucleotides processively in the 3'- to 5'-direction. The protein is Polyribonucleotide nucleotidyltransferase of Polynucleobacter asymbioticus (strain DSM 18221 / CIP 109841 / QLW-P1DMWA-1) (Polynucleobacter necessarius subsp. asymbioticus).